The chain runs to 156 residues: RNA pyrophosphohydrolase (156 aa).

A Nudix hydrolase domain is found at 6–148; sequence NYRPNVAAIV…KKNIYVRVIK (143 aa). The short motif at 43 to 64 is the Nudix box element; sequence GGIDKGESVKNALFRELKEEIG.

The protein belongs to the Nudix hydrolase family. RppH subfamily. A divalent metal cation is required as a cofactor.

Accelerates the degradation of transcripts by removing pyrophosphate from the 5'-end of triphosphorylated RNA, leading to a more labile monophosphorylated state that can stimulate subsequent ribonuclease cleavage. This Campylobacter jejuni subsp. jejuni serotype O:2 (strain ATCC 700819 / NCTC 11168) protein is RNA pyrophosphohydrolase.